A 502-amino-acid chain; its full sequence is Ubiquitin-associated protein 1 (502 aa).

The tract at residues 1–95 is interaction with ESCRT-I; the sequence is MASKKLGTDV…AEAKVNSKSG (95 aa). The UMA domain occupies 17-63; that stretch reads LDDVPFKIGDKFKTPAKVGLPIGFSLPDCLQVVREMQYDFSLEKKTI. The span at 80–100 shows a compositional bias: basic and acidic residues; sequence ERKAEEAEAKVNSKSGPEGDS. Disordered stretches follow at residues 80 to 117 and 135 to 156; these read ERKA…PPPI and VSSS…DFNP. Phosphoserine occurs at positions 146, 205, and 289. The interaction with PTPN23 stretch occupies residues 260-290; that stretch reads VSNIKSLSFPKLDSDDSNQKTVKLASTFHST. UBA domains lie at 389–430 and 451–498; these read SPSE…LFAH and QCSE…LMAR.

As to quaternary structure, component of an ESCRT-I complex (endosomal sorting complex required for transport I) which consists of TSG101, VPS28, VPS37A and UBAP1 in a 1:1:1:1 stoichiometry. Interacts with PTPN23. Interacts (via UBA domains) with ubiquitinated proteins. As to expression, ubiquitous. Highly expressed in heart, liver, brain, kidney, spleen, skeletal muscle, stomach, testis and lung.

The protein localises to the cytoplasm. Its subcellular location is the cytosol. It localises to the endosome. Component of the ESCRT-I complex, a regulator of vesicular trafficking process. Binds to ubiquitinated cargo proteins and is required for the sorting of endocytic ubiquitinated cargos into multivesicular bodies (MVBs). Plays a role in the proteasomal degradation of ubiquitinated cell-surface proteins, such as EGFR and BST2. This Mus musculus (Mouse) protein is Ubiquitin-associated protein 1.